We begin with the raw amino-acid sequence, 63 residues long: Large ribosomal subunit protein uL29 (63 aa).

Belongs to the universal ribosomal protein uL29 family.

The sequence is that of Large ribosomal subunit protein uL29 from Hahella chejuensis (strain KCTC 2396).